The primary structure comprises 40 residues: Photosystem II reaction center protein Y (40 aa).

The helical transmembrane segment at 5–23 (LVLVASPILLAVGWAGFNI) threads the bilayer.

The protein belongs to the PsbY family. As to quaternary structure, PSII is composed of 1 copy each of membrane proteins PsbA, PsbB, PsbC, PsbD, PsbE, PsbF, PsbH, PsbI, PsbJ, PsbK, PsbL, PsbM, PsbT, PsbX, PsbY, PsbZ, Psb30/Ycf12, peripheral proteins PsbO, CyanoQ (PsbQ), PsbU, PsbV and a large number of cofactors. It forms dimeric complexes.

The protein localises to the cellular thylakoid membrane. Its function is as follows. Loosely associated component of the core of photosystem II (PSII), it is not always seen in crystals. PSII is a light-driven water plastoquinone oxidoreductase, using light energy to abstract electrons from H(2)O, generating a proton gradient subsequently used for ATP formation. The chain is Photosystem II reaction center protein Y from Synechococcus sp. (strain RCC307).